The chain runs to 149 residues: Calmodulin (149 aa).

Ala-2 is subject to N-acetylalanine. EF-hand domains are found at residues 8–43 (EQIS…LGQN), 44–79 (PTEA…KMRD), 81–116 (DSEE…LGEK), and 117–149 (LTDN…MLSK). Residues Asp-21, Asp-23, Asp-25, Thr-27, Glu-32, Asp-57, Asp-59, Asn-61, Thr-63, Glu-68, Asp-94, Asp-96, Asn-98, Tyr-100, Glu-105, Asp-130, Asp-132, Asp-134, Gln-136, and Glu-141 each coordinate Ca(2+).

Belongs to the calmodulin family. In terms of processing, trimethylation of Lys-116 observed in other calmodulins is absent here.

Calmodulin mediates the control of a large number of enzymes, ion channels and other proteins by Ca(2+). Among the enzymes to be stimulated by the calmodulin-Ca(2+) complex are a number of protein kinases and phosphatases. This is Calmodulin (CMD1) from Pleurotus cornucopiae (Cornucopia mushroom).